Reading from the N-terminus, the 594-residue chain is MKNIRNFSIIAHIDHGKSTLSDRFIQVCNGLSEREMKEQVLDSMDIERERGITIKAQSVTLDYTARDGQTYQLNFIDTPGHVDFSYEVSRSLAACEGALLVVDAAQGVEAQTVANCYTAIEQNLEVIPILNKIDLPSAEPDRVAQEIEKIIGIDATGATTCSAKIGIGVEDVLETIVAKVPAPEGDVNAKLQALIIDSWFDNYLGVVSLVRVKNGTIKKGEKFKVMSTGVAYQVDRLGVFTPKMKDLDHLKAGEVGFIVAGIKDIHGAPVGDTLTHAHNPTDKPVPGFKKVQPQVYAGMFTISSDDYPDFREALEKLSLNDASLFFEPEVSQALGFGFRCGFLGMLHMEIIQERLEREYNLDLITSAPTVVYKAIKKDGEIIEVDNLSKLPEPGAIAEIQEPIVRANILVPKDYVGSVITICIEKRGVQVDLNYVGNQVSITYDLPMIEVVSDFFDTLKSVTKGYGSLDYELIRYEPANMVCLDVLINGDKVDALASIVHKDQAKYKGRELVERLKELIPRQMFEVAIQAAIGGTIVARSTVKALRKNVLAKCYGGDVSRKKKLLEKQKEGKKRMKNIGSVEIPQEAFLSVLKK.

A tr-type G domain is found at 2 to 184; the sequence is KNIRNFSIIA…TIVAKVPAPE (183 aa). Residues 14 to 19 and 131 to 134 each bind GTP; these read DHGKST and NKID.

This sequence belongs to the TRAFAC class translation factor GTPase superfamily. Classic translation factor GTPase family. LepA subfamily.

The protein resides in the cell inner membrane. The catalysed reaction is GTP + H2O = GDP + phosphate + H(+). Its function is as follows. Required for accurate and efficient protein synthesis under certain stress conditions. May act as a fidelity factor of the translation reaction, by catalyzing a one-codon backward translocation of tRNAs on improperly translocated ribosomes. Back-translocation proceeds from a post-translocation (POST) complex to a pre-translocation (PRE) complex, thus giving elongation factor G a second chance to translocate the tRNAs correctly. Binds to ribosomes in a GTP-dependent manner. This is Elongation factor 4 from Francisella tularensis subsp. tularensis (strain WY96-3418).